A 106-amino-acid chain; its full sequence is Large ribosomal subunit protein uL24 (106 aa).

The protein belongs to the universal ribosomal protein uL24 family. In terms of assembly, part of the 50S ribosomal subunit.

One of two assembly initiator proteins, it binds directly to the 5'-end of the 23S rRNA, where it nucleates assembly of the 50S subunit. In terms of biological role, one of the proteins that surrounds the polypeptide exit tunnel on the outside of the subunit. The protein is Large ribosomal subunit protein uL24 of Porphyromonas gingivalis (strain ATCC 33277 / DSM 20709 / CIP 103683 / JCM 12257 / NCTC 11834 / 2561).